The primary structure comprises 155 residues: Endoribonuclease YbeY (155 aa).

Zn(2+) is bound by residues His-114, His-118, and His-124.

The protein belongs to the endoribonuclease YbeY family. Requires Zn(2+) as cofactor.

The protein localises to the cytoplasm. Functionally, single strand-specific metallo-endoribonuclease involved in late-stage 70S ribosome quality control and in maturation of the 3' terminus of the 16S rRNA. The chain is Endoribonuclease YbeY from Baumannia cicadellinicola subsp. Homalodisca coagulata.